Here is a 392-residue protein sequence, read N- to C-terminus: HORMA domain-containing protein 1 (392 aa).

One can recognise an HORMA domain in the interval 25-227; the sequence is QQSLMFVKRL…TPFHTFRLKV (203 aa). Disordered regions lie at residues 271 to 292 and 371 to 392; these read IKTK…EPNL and LESS…NEHT. Ser-374 is modified (phosphoserine). The Nuclear localization signal motif lies at 381–384; it reads KRRR.

In terms of assembly, interacts with HORMAD2. Interacts with IHO1. Phosphorylated at Ser-375 in a SPO11-dependent manner.

It is found in the nucleus. It localises to the chromosome. Plays a key role in meiotic progression. Regulates 3 different functions during meiosis: ensures that sufficient numbers of processed DNA double-strand breaks (DSBs) are available for successful homology search by increasing the steady-state numbers of single-stranded DSB ends. Promotes synaptonemal-complex formation independently of its role in homology search. Plays a key role in the male mid-pachytene checkpoint and the female meiotic prophase checkpoint: required for efficient build-up of ATR activity on unsynapsed chromosome regions, a process believed to form the basis of meiotic silencing of unsynapsed chromatin (MSUC) and meiotic prophase quality control in both sexes. The sequence is that of HORMA domain-containing protein 1 (Hormad1) from Rattus norvegicus (Rat).